A 303-amino-acid chain; its full sequence is Shikimate kinase 1, chloroplastic (303 aa).

Residues 1-66 (MEAAITQRIQ…QRRAVSPAVS (66 aa)) constitute a chloroplast transit peptide. 109-116 (GMMGSGKT) contacts ATP. A Mg(2+)-binding site is contributed by threonine 116. Positions 134, 159, and 181 each coordinate substrate. Arginine 220 lines the ATP pocket.

Belongs to the shikimate kinase family. As to quaternary structure, homodimer. It depends on Mg(2+) as a cofactor.

Its subcellular location is the plastid. It is found in the chloroplast. It carries out the reaction shikimate + ATP = 3-phosphoshikimate + ADP + H(+). It functions in the pathway metabolic intermediate biosynthesis; chorismate biosynthesis; chorismate from D-erythrose 4-phosphate and phosphoenolpyruvate: step 5/7. Its function is as follows. Catalyzes the specific phosphorylation of the 3-hydroxyl group of shikimic acid using ATP as a cosubstrate. In Arabidopsis thaliana (Mouse-ear cress), this protein is Shikimate kinase 1, chloroplastic (SK1).